The chain runs to 183 residues: MSAARESHPHGVKRSASPDDDLGSSNWEAADLGNEERKQKFLRLMGAGKKEHTGRLVIGDHKSTSHFRTGEEDKKINEELESQYQQSMDSKLSGRYRRHCGLGFSEVEDHDGEGDVAGDDDDNDDDSPDPESPDDSESDSESEKEESAEELQAAEHPDEVEDPKNKKDAKSNYKMMFVKSSGS.

The segment at 1-183 (MSAARESHPH…KMMFVKSSGS (183 aa)) is disordered. A Glycyl lysine isopeptide (Lys-Gly) (interchain with G-Cter in SUMO2) cross-link involves residue Lys13. Phosphoserine is present on residues Ser15 and Ser17. Positions 48 to 78 (GKKEHTGRLVIGDHKSTSHFRTGEEDKKINE) are enriched in basic and acidic residues. Lys62 participates in a covalent cross-link: Glycyl lysine isopeptide (Lys-Gly) (interchain with G-Cter in SUMO2). Ser63 is modified (phosphoserine). A Glycyl lysine isopeptide (Lys-Gly) (interchain with G-Cter in SUMO2) cross-link involves residue Lys75. Residues Ser87, Ser127, and Ser147 each carry the phosphoserine modification. A compositionally biased stretch (acidic residues) spans 106–149 (EVEDHDGEGDVAGDDDDNDDDSPDPESPDDSESDSESEKEESAE). A compositionally biased stretch (basic and acidic residues) spans 153-171 (AAEHPDEVEDPKNKKDAKS). N6-acetyllysine is present on residues Lys174 and Lys179.

Belongs to the SMAP family.

This Pongo abelii (Sumatran orangutan) protein is Small acidic protein (SMAP).